A 104-amino-acid chain; its full sequence is Cell division protein FtsL (104 aa).

At 1 to 19 the chain is on the cytoplasmic side; that stretch reads MSTPNTHLLCLIATDLRKH. A helical membrane pass occupies residues 20–39; it reads FFAVLVGMLIVCSAIYNVYT. Residues 40–104 are Periplasmic-facing; that stretch reads THKTRGLVTQ…KKNSVLVELR (65 aa).

Belongs to the FtsL family. As to quaternary structure, part of a complex composed of FtsB, FtsL and FtsQ.

It is found in the cell inner membrane. Essential cell division protein. May link together the upstream cell division proteins, which are predominantly cytoplasmic, with the downstream cell division proteins, which are predominantly periplasmic. This Psychromonas ingrahamii (strain DSM 17664 / CCUG 51855 / 37) protein is Cell division protein FtsL.